The following is a 148-amino-acid chain: Large ribosomal subunit protein bL9 (148 aa).

This sequence belongs to the bacterial ribosomal protein bL9 family.

Functionally, binds to the 23S rRNA. This chain is Large ribosomal subunit protein bL9, found in Pseudomonas fluorescens (strain SBW25).